Reading from the N-terminus, the 88-residue chain is U-scoloptoxin(01)-Tl1a (88 aa).

Residues 1 to 16 (MSVYGLLSLLIFIVLA) form the signal peptide. In terms of domain architecture, Chitin-binding type-2 spans 25 to 81 (GKDCSEKEEYLYDSSNCDIFYECDESLKPQRMMCGPGTGWNQDKLVCDFLTNIDCTR). An intrachain disulfide couples Cys58 to Cys71.

It belongs to the scoloptoxin-01 family. Contains 3 disulfide bonds. Expressed by the venom gland.

The protein localises to the secreted. This is U-scoloptoxin(01)-Tl1a from Thereuopoda longicornis (Long-legged centipede).